A 274-amino-acid chain; its full sequence is Copper chaperone for superoxide dismutase (274 aa).

One can recognise an HMA domain in the interval M11 to V74. Positions 22 and 25 each coordinate Cu cation. K76 participates in a covalent cross-link: Glycyl lysine isopeptide (Lys-Gly) (interchain with G-Cter in ubiquitin). Positions A88 to A234 are superoxide dismutase-like. The cysteines at positions 141 and 227 are disulfide-linked. The Zn(2+) site is built by H147, H155, H164, and D167. Glycyl lysine isopeptide (Lys-Gly) (interchain with G-Cter in ubiquitin) cross-links involve residues K189, K216, and K241. 2 residues coordinate Cu cation: C244 and C246. S267 is subject to Phosphoserine.

This sequence in the C-terminal section; belongs to the Cu-Zn superoxide dismutase family. As to quaternary structure, homodimer, and heterodimer with SOD1. Interacts with COMMD1. Interacts with XIAP/BIRC4. Interacts with SLC31A1(via C-terminal domain); this interaction is Cu(1+)-mediated. The heterodimer CCS:SOD1 interacts with SLC31A1; this heterotrimer is Cu(1+)-mediated and its maintenance is regulated through SOD1 activation. The cofactor is Cu(2+). It depends on Zn(2+) as a cofactor. In terms of processing, ubiquitinion by XIAP/BIRC4 leads to enhancement of its chaperone activity toward its physiologic target, SOD1, rather than proteasomal degradation. XIAP/BIRC4 preferentially ubiquitinates at Lys-241.

The protein resides in the cytoplasm. In terms of biological role, delivers copper to copper zinc superoxide dismutase (SOD1). The protein is Copper chaperone for superoxide dismutase of Rattus norvegicus (Rat).